Consider the following 176-residue polypeptide: NADH-quinone oxidoreductase subunit I (176 aa).

4Fe-4S ferredoxin-type domains lie at 47–77 (LTRD…MQAA) and 87–116 (AWFR…MTSE). The [4Fe-4S] cluster site is built by Cys57, Cys60, Cys63, Cys67, Cys96, Cys99, Cys102, and Cys106.

This sequence belongs to the complex I 23 kDa subunit family. NDH-1 is composed of 14 different subunits. Subunits NuoA, H, J, K, L, M, N constitute the membrane sector of the complex. The cofactor is [4Fe-4S] cluster.

It localises to the cell inner membrane. The enzyme catalyses a quinone + NADH + 5 H(+)(in) = a quinol + NAD(+) + 4 H(+)(out). In terms of biological role, NDH-1 shuttles electrons from NADH, via FMN and iron-sulfur (Fe-S) centers, to quinones in the respiratory chain. The immediate electron acceptor for the enzyme in this species is believed to be ubiquinone. Couples the redox reaction to proton translocation (for every two electrons transferred, four hydrogen ions are translocated across the cytoplasmic membrane), and thus conserves the redox energy in a proton gradient. In Syntrophotalea carbinolica (strain DSM 2380 / NBRC 103641 / GraBd1) (Pelobacter carbinolicus), this protein is NADH-quinone oxidoreductase subunit I.